Reading from the N-terminus, the 156-residue chain is Small ribosomal subunit protein uS7 (156 aa).

The protein belongs to the universal ribosomal protein uS7 family. Part of the 30S ribosomal subunit. Contacts proteins S9 and S11.

One of the primary rRNA binding proteins, it binds directly to 16S rRNA where it nucleates assembly of the head domain of the 30S subunit. Is located at the subunit interface close to the decoding center, probably blocks exit of the E-site tRNA. This is Small ribosomal subunit protein uS7 from Carsonella ruddii (strain PV).